The chain runs to 342 residues: MTKKIAILGASGYTGAELCRLIAGHPDMTIVALTGDRKAGQPMASVYPFLRGAGLPDLVRIEDVDFSGVDLAFCALPHATSQSVIKALPADLKVVDLSADFRLRDPADYAKWYGKDHDAPALQKQAIYGLTEFYRDQIRDARLVAGTGCNAATGQFALRPLIENGVVDLDDIIIDLICGVSGAGRALKENLLHAELSEGTHAYALGGTHRHLGEFDQEFSKVAGRKVEVQFTPHLAPFNRGILATCYVKGDAQAIHATLTAAYRGEMFIEVLPFGAAPSTHDVRGTNYCHIGVVADRRSGRAQIVAALDNLCKGSSGQAVQNANLMLGLEETAGLLGLGVFP.

Residue cysteine 149 is part of the active site.

This sequence belongs to the NAGSA dehydrogenase family. Type 1 subfamily.

The protein resides in the cytoplasm. The enzyme catalyses N-acetyl-L-glutamate 5-semialdehyde + phosphate + NADP(+) = N-acetyl-L-glutamyl 5-phosphate + NADPH + H(+). It functions in the pathway amino-acid biosynthesis; L-arginine biosynthesis; N(2)-acetyl-L-ornithine from L-glutamate: step 3/4. Functionally, catalyzes the NADPH-dependent reduction of N-acetyl-5-glutamyl phosphate to yield N-acetyl-L-glutamate 5-semialdehyde. In Jannaschia sp. (strain CCS1), this protein is N-acetyl-gamma-glutamyl-phosphate reductase.